We begin with the raw amino-acid sequence, 105 residues long: Signal peptidase complex subunit 1 (105 aa).

The Cytoplasmic segment spans residues 1 to 32; sequence MDGMIAMLPAPLQKLSSHIDFQGQKVAERTYQ. A helical transmembrane segment spans residues 33-53; that stretch reads VILTIAGIIGFLVGFWTQQLS. Residues 54-56 are Lumenal-facing; it reads YAM. A helical membrane pass occupies residues 57 to 77; that stretch reads FTVLGASAFTALIILPPWPFL. Over 78 to 105 the chain is Cytoplasmic; sequence FRKNPIVWHTPAEPQESGDKKKETKKTK.

Belongs to the SPCS1 family. Component of the signal peptidase complex (SPC) composed of a catalytic subunit sec-11 and three accessory subunits spcs-1, spcs-2 and spcs-3. The complex induces a local thinning of the ER membrane which is used to measure the length of the signal peptide (SP) h-region of protein substrates. This ensures the selectivity of the complex towards h-regions shorter than 18-20 amino acids.

It is found in the endoplasmic reticulum membrane. Its function is as follows. Component of the signal peptidase complex (SPC) which catalyzes the cleavage of N-terminal signal sequences from nascent proteins as they are translocated into the lumen of the endoplasmic reticulum. Dispensable for SPC enzymatic activity. The polypeptide is Signal peptidase complex subunit 1 (Caenorhabditis elegans).